We begin with the raw amino-acid sequence, 389 residues long: MVSVSEIRQAQRAEGPATILAIGTANPANKVEQATYPDFYFKITNSEHKVELKEKFQRMCDKSMIKSRYMYLTEEILKENPSLCEYMAPSLDARQDMVVVEVPRLGKEAAVKAIKEWGQPKSKITHLIFCTTSGVDMPGADYQLTKLLGLRPYVKRYMMYQQGCFAGGTVLRLAKDLAENNKGARVLVVCSEVTAVTFRGPSDTHLDSLVGQALFGDGAAALIVGSDPVPEIEKPIFVMVWTAQTIAPDSEGAIDGHLREAGLTFHLLKDVPGIVSKNIDKALVEAFQPLGISDYNSIFWIAHPGGPAILDQVEQKLALKPEKMKATREVLSEYGNMSSACVLFILDEMRKKSTKDGLKTTGEGLDWGVLFGFGPGLTIETVVLHSVAI.

Residue cysteine 164 is part of the active site.

It belongs to the thiolase-like superfamily. Chalcone/stilbene synthases family.

It catalyses the reaction (E)-4-coumaroyl-CoA + 3 malonyl-CoA + 3 H(+) = 2',4,4',6'-tetrahydroxychalcone + 3 CO2 + 4 CoA. It participates in secondary metabolite biosynthesis; flavonoid biosynthesis. The primary product of this enzyme is 4,2',4',6'-tetrahydroxychalcone (also termed naringenin-chalcone or chalcone) which can under specific conditions spontaneously isomerize into naringenin. The sequence is that of Chalcone synthase 3 (CHS3) from Trifolium subterraneum (Subterranean clover).